The following is a 445-amino-acid chain: MKPVIALVGRPNVGKSTLFNRLTKTRDAIVADFAGLTRDRHYGNGKLGPHEYIVIDTGGFEPDAVTGIYKEMARQTRQAVAESDVVIFVVDARAGISAQDYDIANYLRKLGKPTVLAANKAEGLPEGTQVSEFFELGLGEMLAVSASHGQGMRMLVDLALAPLNLPDPAEETEQEDPAVIKLAVAGRPNVGKSTLINTWLGEERLVAFDLPGTTRDAISVPFEHAGQKFELIDTAGLRRKGKVFEAIEKFSVVKTLQAIENANVVLLLLDATQGVTDQDAHIAGYILESGRAVVLAVNKWDAVDAYQRELLQRSIETRLGFLKFASIHHISAIKRQGLGPVWKSIIQAHASANRKMSTPVLTRLLMEAVQFQQPQRSGVFRPKLRYAHQGGMNPPIVIIHGNSLDHVTESYKRYLEGRIRKEFDLVGTPLRIQLKSSVNPFKDKE.

EngA-type G domains are found at residues 3 to 167 (PVIA…NLPD) and 180 to 353 (IKLA…ASAN). Residues 9–16 (GRPNVGKS), 56–60 (DTGGF), 119–122 (NKAE), 186–193 (GRPNVGKS), 233–237 (DTAGL), and 298–301 (NKWD) each bind GTP. In terms of domain architecture, KH-like spans 354–438 (RKMSTPVLTR…PLRIQLKSSV (85 aa)).

It belongs to the TRAFAC class TrmE-Era-EngA-EngB-Septin-like GTPase superfamily. EngA (Der) GTPase family. Associates with the 50S ribosomal subunit.

GTPase that plays an essential role in the late steps of ribosome biogenesis. The sequence is that of GTPase Der from Polaromonas naphthalenivorans (strain CJ2).